The following is a 164-amino-acid chain: Protein-export protein SecB (164 aa).

This sequence belongs to the SecB family. In terms of assembly, homotetramer, a dimer of dimers. One homotetramer interacts with 1 SecA dimer.

Its subcellular location is the cytoplasm. Its function is as follows. One of the proteins required for the normal export of preproteins out of the cell cytoplasm. It is a molecular chaperone that binds to a subset of precursor proteins, maintaining them in a translocation-competent state. It also specifically binds to its receptor SecA. This is Protein-export protein SecB from Chromohalobacter salexigens (strain ATCC BAA-138 / DSM 3043 / CIP 106854 / NCIMB 13768 / 1H11).